A 201-amino-acid polypeptide reads, in one-letter code: 3-isopropylmalate dehydratase small subunit (201 aa).

It belongs to the LeuD family. LeuD type 1 subfamily. Heterodimer of LeuC and LeuD.

The enzyme catalyses (2R,3S)-3-isopropylmalate = (2S)-2-isopropylmalate. It functions in the pathway amino-acid biosynthesis; L-leucine biosynthesis; L-leucine from 3-methyl-2-oxobutanoate: step 2/4. In terms of biological role, catalyzes the isomerization between 2-isopropylmalate and 3-isopropylmalate, via the formation of 2-isopropylmaleate. The chain is 3-isopropylmalate dehydratase small subunit from Shewanella halifaxensis (strain HAW-EB4).